Reading from the N-terminus, the 992-residue chain is UvrABC system protein A (992 aa).

Residues 1 to 11 (MPKNSSTTVSS) are compositionally biased toward polar residues. Residues 1 to 30 (MPKNSSTTVSSAVEAHAGGLASGPGGARSG) form a disordered region. 62 to 69 (GLSGSGKS) is an ATP binding site. A C4-type; atypical zinc finger spans residues 302 to 330 (CPNGHEQTVDEIEPRSFSFNNPFGACPEC). ABC transporter domains are found at residues 360–639 (WSLG…TRSV) and 659–988 (PEKG…RFLA). Position 692-699 (692-699 (GVSGSGKS)) interacts with ATP. The C4-type zinc finger occupies 791–817 (CEACAGDGTLKIEMNFLPDVYVPCEVC).

Belongs to the ABC transporter superfamily. UvrA family. Forms a heterotetramer with UvrB during the search for lesions.

Its subcellular location is the cytoplasm. Functionally, the UvrABC repair system catalyzes the recognition and processing of DNA lesions. UvrA is an ATPase and a DNA-binding protein. A damage recognition complex composed of 2 UvrA and 2 UvrB subunits scans DNA for abnormalities. When the presence of a lesion has been verified by UvrB, the UvrA molecules dissociate. The protein is UvrABC system protein A of Micrococcus luteus (Micrococcus lysodeikticus).